The following is a 774-amino-acid chain: MAVNGTGNGTGDGDFSLKETSPNIGNGGVNGGEKLTSSFDLVEAMHFLYARIVRARALPVNDSFVAVKIGSYKGRTKQILNSNPNPEFHETFAFTKTRLQGDILEVVVRNRDNPNEDDIVGKCKFDVAEIPTRVPPDSPLAPQWYRLEDRNGVKIGGEIMVSVWIGTQADEVFSEAWHSDSASVTGENVVNTRSKVYLSPRLWYLRVNVIEAQDLVLLHPNRINPEILIKGFLGNVVVRSRISQTKSVSPVWNEDMMFVAVEPFDDSLILSVEDKVGPREECLGRCEIKLSQVERRVLPGPVPSLWYNVEHIGETGEGRRFAGRIHLRVSLDGGYHVLDESIQYSSDYRASAKLLWTPPIGVLELGVLNATGLMPMKSRGGRGTTDAYCVAKYGTKWVRTRTIVDTFDPKWNEQYTWEVYDPYTVITIGVFDNLKLFGAGNENRLINDSRIGKIRIRLSTLVTSKIYTHSYPLMVLKPDGVKKMGEIQLAVRFTATSMMDMLQKYTEPLLPEMHYISPLSIYQLDSLRHQATHILCINLGRNEPALGRDVVEYMLDVGSNIWSLRRGRANFERLVSFFDGWIDAWKWFDEICKWKSPVTSVLVHIVCLFVVFLPKYCVFSMLLYCFVFGLYRFGLRPRHPPHMDIKLSKADSALPDELDEEFDVFPSSKSGDVLKRRYDRLRGIAGRMMIVLGDLATQGERVKSLLSWRDPRATSLFLTFCFVSCGVICFVSMKLLLTFLAFYVMRHPRVRVFDIPSIPQNFFRRLPSRADSIL.

The segment covering 1–12 (MAVNGTGNGTGD) has biased composition (gly residues). The tract at residues 1 to 30 (MAVNGTGNGTGDGDFSLKETSPNIGNGGVN) is disordered. 3 C2 domains span residues 9–145 (GTGD…PQWY), 184–307 (VTGE…SLWY), and 338–471 (LDES…THSY). 4 residues coordinate Ca(2+): aspartate 62, asparagine 110, aspartate 112, and aspartate 118. Helical transmembrane passes span 608–628 (LFVVFLPKYCVFSMLLYCFVF) and 722–742 (FVSCGVICFVSMKLLLTFLAF).

The protein belongs to the MCTP family. Ca(2+) serves as cofactor. In terms of tissue distribution, observed in flowers.

The protein resides in the endoplasmic reticulum membrane. May function as a signaling molecule by regulating the trafficking of other regulators. The chain is Multiple C2 domain and transmembrane region protein 11 from Arabidopsis thaliana (Mouse-ear cress).